The primary structure comprises 302 residues: Negative regulator of the PHO system (302 aa).

The Protein kinase domain maps to 6–296; the sequence is FKQLEKLGNG…AKQALLHPWF (291 aa). Residues 12 to 20 and Lys35 contribute to the ATP site; that span reads LGNGTYATV. Asp132 (proton acceptor) is an active-site residue.

This sequence belongs to the protein kinase superfamily. CMGC Ser/Thr protein kinase family. CDC2/CDKX subfamily. As to quaternary structure, interacts with a number of cyclins.

It carries out the reaction L-seryl-[protein] + ATP = O-phospho-L-seryl-[protein] + ADP + H(+). It catalyses the reaction L-threonyl-[protein] + ATP = O-phospho-L-threonyl-[protein] + ADP + H(+). In terms of biological role, when phosphate concentrations are high it phosphorylates the PHO4 transcription factor thus establishing repression. The sequence is that of Negative regulator of the PHO system (PHO85) from Candida glabrata (strain ATCC 2001 / BCRC 20586 / JCM 3761 / NBRC 0622 / NRRL Y-65 / CBS 138) (Yeast).